Consider the following 217-residue polypeptide: MAAGSRTSLLLAFALLCLPWLQEGSAFPTIPLSRLFDNAMLRAHRLHQLAFDTYQEFEEAYIPKEQKYSFLQNPQTSLCFSESIPTPSNREETQQKSNLELLRISLLLIQSWLEPVQFLRSVFANSLVYGTSYSDVYDLLKDLEEGIQTLMGRLEDGSSRTGQIFKQTYSKFDTNSHNNDALLKNYGLLYCFRKDMDKIETFLRIVQCRSVEGSCGF.

Positions 1 to 26 (MAAGSRTSLLLAFALLCLPWLQEGSA) are cleaved as a signal peptide. H44 serves as a coordination point for Zn(2+). C79 and C191 form a disulfide bridge. Phosphoserine is present on S132. Residue E200 participates in Zn(2+) binding. C208 and C215 form a disulfide bridge.

The protein belongs to the somatotropin/prolactin family.

The protein localises to the secreted. Its function is as follows. Plays an important role in growth control. Its major role in stimulating body growth is to stimulate the liver and other tissues to secrete IGF1. It stimulates both the differentiation and proliferation of myoblasts. It also stimulates amino acid uptake and protein synthesis in muscle and other tissues. This chain is Somatotropin (GH1), found in Macaca mulatta (Rhesus macaque).